The primary structure comprises 209 residues: Uridine kinase (209 aa).

G12 to T19 contacts ATP.

Belongs to the uridine kinase family.

It is found in the cytoplasm. The enzyme catalyses uridine + ATP = UMP + ADP + H(+). The catalysed reaction is cytidine + ATP = CMP + ADP + H(+). Its pathway is pyrimidine metabolism; CTP biosynthesis via salvage pathway; CTP from cytidine: step 1/3. It participates in pyrimidine metabolism; UMP biosynthesis via salvage pathway; UMP from uridine: step 1/1. This is Uridine kinase from Streptococcus mutans serotype c (strain ATCC 700610 / UA159).